Consider the following 610-residue polypeptide: UvrABC system protein C (610 aa).

The GIY-YIG domain occupies 16-94 (HQPGVYRMYN…IKQYLPKYNV (79 aa)). Residues 204–239 (QQVLKQLIEKMEVASQQLRFEDAAKFRDQIQAIRRV) form the UVR domain.

Belongs to the UvrC family. As to quaternary structure, interacts with UvrB in an incision complex.

The protein localises to the cytoplasm. The UvrABC repair system catalyzes the recognition and processing of DNA lesions. UvrC both incises the 5' and 3' sides of the lesion. The N-terminal half is responsible for the 3' incision and the C-terminal half is responsible for the 5' incision. The protein is UvrABC system protein C of Vibrio parahaemolyticus serotype O3:K6 (strain RIMD 2210633).